The primary structure comprises 392 residues: Probable myosin light chain kinase DDB_G0271550 (392 aa).

Positions 20–278 (YEFGPEIGRG…ASQCIKHPWL (259 aa)) constitute a Protein kinase domain. ATP-binding positions include 26–34 (IGRGAFSIV) and Lys49. Asp142 (proton acceptor) is an active-site residue. A compositionally biased stretch (polar residues) spans 317 to 326 (SQSTPNLHSA). Residues 317–392 (SQSTPNLHSA…NNNNNNNNNI (76 aa)) form a disordered region. A compositionally biased stretch (low complexity) spans 327–392 (NSNTNTNSLS…NNNNNNNNNI (66 aa)).

This sequence belongs to the protein kinase superfamily. CAMK Ser/Thr protein kinase family. CaMK subfamily.

The enzyme catalyses L-seryl-[myosin light chain] + ATP = O-phospho-L-seryl-[myosin light chain] + ADP + H(+). It carries out the reaction L-threonyl-[myosin light chain] + ATP = O-phospho-L-threonyl-[myosin light chain] + ADP + H(+). In terms of biological role, may phosphorylate a specific serine in the N-terminus of a myosin light chain. This Dictyostelium discoideum (Social amoeba) protein is Probable myosin light chain kinase DDB_G0271550.